The following is a 62-amino-acid chain: Weak neurotoxin 5 (62 aa).

Intrachain disulfides connect Cys-3–Cys-24, Cys-6–Cys-11, Cys-17–Cys-40, Cys-44–Cys-54, and Cys-55–Cys-60.

The protein belongs to the three-finger toxin family. Ancestral subfamily. Orphan group II sub-subfamily. Expressed by the venom gland.

It localises to the secreted. Functionally, binds with low affinity to muscular (alpha-1-beta-1-delta-epsilon/CHRNA1-CHRNB1-CHRND-CHRNE) and very low affinity to neuronal (alpha-7/CHRNA7) nicotinic acetylcholine receptor (nAChR). This Naja naja (Indian cobra) protein is Weak neurotoxin 5.